A 237-amino-acid polypeptide reads, in one-letter code: Lectin alpha chain (237 aa).

Glu-8 and Asp-10 together coordinate Mn(2+). The Ca(2+) site is built by Asp-10, Tyr-12, Asn-14, and Asp-19. Tyr-12 is a binding site for a carbohydrate. Residues Asp-19 and His-24 each contribute to the Mn(2+) site. Position 99–100 (99–100 (LY)) interacts with a carbohydrate. Asp-208 provides a ligand contact to Ca(2+). Arg-228 is a binding site for a carbohydrate.

The protein belongs to the leguminous lectin family. Homotetramer. The beta and gamma chains are produced by partial proteolytic processing of the lectin alpha chain by an asparaginyl endopeptidase.

Its subcellular location is the vacuole. It is found in the aleurone grain. In terms of biological role, D-mannose/D-glucose-binding lectin with hemagglutinating activity towards rabbit and human erythrocytes. In rats, elicits an acute inflammatory response by inducing neutrophil migration and induces dose-dependent paw edema. This Macropsychanthus wilsonii (Wilson's clusterpea) protein is Lectin alpha chain.